We begin with the raw amino-acid sequence, 336 residues long: Pyridoxal 5'-phosphate synthase subunit PdxS (336 aa).

Residue aspartate 62 participates in D-ribose 5-phosphate binding. Lysine 119 serves as the catalytic Schiff-base intermediate with D-ribose 5-phosphate. Glycine 191 provides a ligand contact to D-ribose 5-phosphate. D-glyceraldehyde 3-phosphate is bound at residue lysine 203. Residues glycine 254 and 275–276 each bind D-ribose 5-phosphate; that span reads GS.

This sequence belongs to the PdxS/SNZ family. As to quaternary structure, in the presence of PdxT, forms a dodecamer of heterodimers.

It carries out the reaction aldehydo-D-ribose 5-phosphate + D-glyceraldehyde 3-phosphate + L-glutamine = pyridoxal 5'-phosphate + L-glutamate + phosphate + 3 H2O + H(+). Its pathway is cofactor biosynthesis; pyridoxal 5'-phosphate biosynthesis. Catalyzes the formation of pyridoxal 5'-phosphate from ribose 5-phosphate (RBP), glyceraldehyde 3-phosphate (G3P) and ammonia. The ammonia is provided by the PdxT subunit. Can also use ribulose 5-phosphate and dihydroxyacetone phosphate as substrates, resulting from enzyme-catalyzed isomerization of RBP and G3P, respectively. This is Pyridoxal 5'-phosphate synthase subunit PdxS from Pyrobaculum calidifontis (strain DSM 21063 / JCM 11548 / VA1).